A 475-amino-acid polypeptide reads, in one-letter code: Protein transport protein Sec61 subunit alpha (475 aa).

Residues 1-32 (MGFRFLDIVKPFTSLVPEVGQPDRKIPFREKV) are Cytoplasmic-facing. Residues 33–53 (LWTAICLFIFLVCSQIPLYGI) form a helical membrane-spanning segment. The Lumenal portion of the chain corresponds to 54–75 (RSTDSSDPFYWAKVIMASNRGT). The chain crosses the membrane as a helical span at residues 76–96 (LMELGISPIVTSGMVMQLLAG). The Cytoplasmic segment spans residues 97-118 (AKLIEIDQSVKADRDLFSAAQK). A helical membrane pass occupies residues 119–139 (LFGMLICVGQGVAYIWSGSYG). The Lumenal segment spans residues 140 to 145 (DPAVLG). A helical transmembrane segment spans residues 146–166 (FGNCFLIVLQLFFAGIIVMLL). Over 167-173 (DELLQKG) the chain is Cytoplasmic. A helical membrane pass occupies residues 174–194 (YGIGSGISLFIATNICETIVW). Residues 195–241 (KTFSPTTVSVGKGTEFEGAVIALFHLLLTRNDKVRALKEAFYRQNLP) are Lumenal-facing. A helical membrane pass occupies residues 242-262 (NITNLLATVLIFMVVIYFQGF). Residues 263–289 (RVDLPVKSTRVSGQQGTYPIKLFYTSN) are Cytoplasmic-facing. A helical transmembrane segment spans residues 290–310 (IPIILQSALVSNLYFISQLLY). Over 311–353 (RRFPDNILVNLFGAWRTSEYSQQMIPVSGLTYYISSPNNMSAV) the chain is Lumenal. The helical transmembrane segment at 354 to 374 (LADPFHALFYITFMLTSCALF) threads the bilayer. Over 375 to 411 (SKVWIEVSGSSARDVAKQLKDQQMTMKGHRDTSVIKE) the chain is Cytoplasmic. The helical transmembrane segment at 412-434 (LNRYIPTAAAFGGLCIGALTVVA) threads the bilayer. The Lumenal segment spans residues 435–440 (DFMGAI). The helical transmembrane segment at 441 to 461 (GSGTGILLAVTIIYQYFETFV) threads the bilayer. At 462 to 475 (KEQQELSGGIGGLF) the chain is on the cytoplasmic side.

Belongs to the SecY/SEC61-alpha family. As to quaternary structure, heterotrimeric complex composed of SEC61-alpha, SEC61-beta and SEC61-gamma.

The protein resides in the endoplasmic reticulum membrane. Functionally, appears to play a crucial role in the insertion of secretory and membrane polypeptides into the ER. It is required for assembly of membrane and secretory proteins. Found to be tightly associated with membrane-bound ribosomes, either directly or through adaptor proteins. The protein is Protein transport protein Sec61 subunit alpha (sec61a) of Dictyostelium discoideum (Social amoeba).